Consider the following 394-residue polypeptide: NAD(P)H-quinone oxidoreductase subunit H (394 aa).

Belongs to the complex I 49 kDa subunit family. As to quaternary structure, NDH-1 can be composed of about 15 different subunits; different subcomplexes with different compositions have been identified which probably have different functions.

Its subcellular location is the cellular thylakoid membrane. It carries out the reaction a plastoquinone + NADH + (n+1) H(+)(in) = a plastoquinol + NAD(+) + n H(+)(out). It catalyses the reaction a plastoquinone + NADPH + (n+1) H(+)(in) = a plastoquinol + NADP(+) + n H(+)(out). Functionally, NDH-1 shuttles electrons from an unknown electron donor, via FMN and iron-sulfur (Fe-S) centers, to quinones in the respiratory and/or the photosynthetic chain. The immediate electron acceptor for the enzyme in this species is believed to be plastoquinone. Couples the redox reaction to proton translocation, and thus conserves the redox energy in a proton gradient. Cyanobacterial NDH-1 also plays a role in inorganic carbon-concentration. The chain is NAD(P)H-quinone oxidoreductase subunit H from Nostoc sp. (strain PCC 7120 / SAG 25.82 / UTEX 2576).